The sequence spans 358 residues: Chorismate synthase (358 aa).

Residue Arg-47 participates in NADP(+) binding. FMN contacts are provided by residues 124 to 126, 240 to 241, Gly-284, 299 to 303, and Arg-325; these read RSS, NA, and KPIAT.

This sequence belongs to the chorismate synthase family. Homotetramer. FMNH2 serves as cofactor.

It catalyses the reaction 5-O-(1-carboxyvinyl)-3-phosphoshikimate = chorismate + phosphate. It functions in the pathway metabolic intermediate biosynthesis; chorismate biosynthesis; chorismate from D-erythrose 4-phosphate and phosphoenolpyruvate: step 7/7. In terms of biological role, catalyzes the anti-1,4-elimination of the C-3 phosphate and the C-6 proR hydrogen from 5-enolpyruvylshikimate-3-phosphate (EPSP) to yield chorismate, which is the branch point compound that serves as the starting substrate for the three terminal pathways of aromatic amino acid biosynthesis. This reaction introduces a second double bond into the aromatic ring system. In Bacteroides thetaiotaomicron (strain ATCC 29148 / DSM 2079 / JCM 5827 / CCUG 10774 / NCTC 10582 / VPI-5482 / E50), this protein is Chorismate synthase.